We begin with the raw amino-acid sequence, 206 residues long: Probable glutathione S-transferase 6 (206 aa).

Residues 2–79 (VHYKLVYFPL…YLAREFGIAG (78 aa)) enclose the GST N-terminal domain. Glutathione contacts are provided by residues tyrosine 8, tryptophan 39, lysine 43, 49-51 (GQL), and 63-64 (QS). A GST C-terminal domain is found at 81–206 (NDTEAAEVDA…YIANRPDYPF (126 aa)).

The protein belongs to the GST superfamily. Sigma family.

It catalyses the reaction RX + glutathione = an S-substituted glutathione + a halide anion + H(+). In terms of biological role, conjugation of reduced glutathione to a wide number of exogenous and endogenous hydrophobic electrophiles. The polypeptide is Probable glutathione S-transferase 6 (gst-6) (Caenorhabditis elegans).